We begin with the raw amino-acid sequence, 146 residues long: Mitochondrial import receptor subunit TOM20 homolog B (146 aa).

Residues 1–5 lie on the Mitochondrial intermembrane side of the membrane; sequence MMGGS. The helical transmembrane segment at 6 to 25 threads the bilayer; that stretch reads SSRIAAGLGAALFVGYCIYF. At 26 to 146 the chain is on the cytoplasmic side; it reads DRKRRSDPNY…AQSISDDDIE (121 aa). A compositionally biased stretch (basic residues) spans 37 to 47; sequence NKLRERRKKQK. A disordered region spans residues 37-56; the sequence is NKLRERRKKQKAAQEKAGLS. Ser-141 carries the post-translational modification Phosphoserine.

This sequence belongs to the Tom20 family. As to quaternary structure, forms part of the preprotein translocase complex of the outer mitochondrial membrane (TOM complex). Interacts with tom22.

Its subcellular location is the mitochondrion outer membrane. In terms of biological role, central component of the receptor complex responsible for the recognition and translocation of cytosolically synthesized mitochondrial preproteins. Together with tom22 functions as the transit peptide receptor at the surface of the mitochondrion outer membrane and facilitates the movement of preproteins into the tom40 translocation pore. In Danio rerio (Zebrafish), this protein is Mitochondrial import receptor subunit TOM20 homolog B (tomm20b).